We begin with the raw amino-acid sequence, 458 residues long: Phosphoglucosamine mutase (458 aa).

The active-site Phosphoserine intermediate is the Ser106. Ser106, Asp247, Asp249, and Asp251 together coordinate Mg(2+). The residue at position 106 (Ser106) is a Phosphoserine.

It belongs to the phosphohexose mutase family. The cofactor is Mg(2+). Activated by phosphorylation.

It carries out the reaction alpha-D-glucosamine 1-phosphate = D-glucosamine 6-phosphate. Functionally, catalyzes the conversion of glucosamine-6-phosphate to glucosamine-1-phosphate. The protein is Phosphoglucosamine mutase of Chlamydia trachomatis serovar A (strain ATCC VR-571B / DSM 19440 / HAR-13).